The primary structure comprises 350 residues: S-adenosylmethionine:tRNA ribosyltransferase-isomerase (350 aa).

The protein belongs to the QueA family. In terms of assembly, monomer.

It localises to the cytoplasm. It carries out the reaction 7-aminomethyl-7-carbaguanosine(34) in tRNA + S-adenosyl-L-methionine = epoxyqueuosine(34) in tRNA + adenine + L-methionine + 2 H(+). Its pathway is tRNA modification; tRNA-queuosine biosynthesis. In terms of biological role, transfers and isomerizes the ribose moiety from AdoMet to the 7-aminomethyl group of 7-deazaguanine (preQ1-tRNA) to give epoxyqueuosine (oQ-tRNA). The protein is S-adenosylmethionine:tRNA ribosyltransferase-isomerase of Aliivibrio fischeri (strain ATCC 700601 / ES114) (Vibrio fischeri).